Consider the following 548-residue polypeptide: Glucose-6-phosphate isomerase (548 aa).

Glu355 acts as the Proton donor in catalysis. Catalysis depends on residues His386 and Lys514.

It belongs to the GPI family.

The protein localises to the cytoplasm. The enzyme catalyses alpha-D-glucose 6-phosphate = beta-D-fructose 6-phosphate. It participates in carbohydrate biosynthesis; gluconeogenesis. It functions in the pathway carbohydrate degradation; glycolysis; D-glyceraldehyde 3-phosphate and glycerone phosphate from D-glucose: step 2/4. Its function is as follows. Catalyzes the reversible isomerization of glucose-6-phosphate to fructose-6-phosphate. The polypeptide is Glucose-6-phosphate isomerase (Yersinia enterocolitica serotype O:8 / biotype 1B (strain NCTC 13174 / 8081)).